The following is a 379-amino-acid chain: MNTPRIIVAMSGGVDSSVAAWRLNSQREAIAGLFMRNWTDDGNGQCHAEEDRRDAVAVCGILGIAFHFRDFSHEYWQEVFTHFLAEYANGRTPNPDVLCNREIKFKHFLETARELGADRIATGHYARIEHYRQRWHLLRGADRSKDQSYFLHQLGQEQLAATLFPIGDLEKQQLRQLAHQTGLPTHAKKDSTGICFIGERNFREFLKQYLPAQPGEIRDPQEQRIAEHPGVFYFTLGQRQGLNIGGVRNRPPSPWYVIGKDLATNVLYVDQHRDSPFLQSRWLRSEPAHWVSGSPPAHTFTCTAQTRYRQADEPCKVTVRNDGSLDVDFTRTQWAVTPGQSLVLYDGNECLGGAVIATTDAPLERKRARNLSKTENVLQ.

ATP-binding positions include 9-16 (AMSGGVDS) and Met35. The tract at residues 94 to 96 (NPD) is interaction with target base in tRNA. Cys99 (nucleophile) is an active-site residue. Cys99 and Cys195 are joined by a disulfide. Gly123 contacts ATP. Positions 145–147 (KDQ) are interaction with tRNA. The active-site Cysteine persulfide intermediate is Cys195. The segment at 307 to 308 (RY) is interaction with tRNA.

This sequence belongs to the MnmA/TRMU family.

Its subcellular location is the cytoplasm. It catalyses the reaction S-sulfanyl-L-cysteinyl-[protein] + uridine(34) in tRNA + AH2 + ATP = 2-thiouridine(34) in tRNA + L-cysteinyl-[protein] + A + AMP + diphosphate + H(+). Catalyzes the 2-thiolation of uridine at the wobble position (U34) of tRNA, leading to the formation of s(2)U34. This is tRNA-specific 2-thiouridylase MnmA from Xylella fastidiosa (strain M12).